The chain runs to 217 residues: Ras-related protein Rab-19 (217 aa).

Residues Ser26, Val28, Gly29, Lys30, Thr31, Cys32, Tyr42, Ser43, Glu44, Ser45, and Thr49 each contribute to the GTP site. Mg(2+) is bound at residue Thr31. Residues 39-54 carry the Switch 1 motif; the sequence is SGVYSESQQNTIGVDF. Mg(2+)-binding residues include Thr49 and Asp72. A Switch 2 motif is present at residues 74 to 89; that stretch reads AGQERFRTITQSYYRS. Gly75, Asn130, Lys131, Asp133, Ser161, Ala162, and Lys163 together coordinate GTP. S-geranylgeranyl cysteine attachment occurs at residues Cys215 and Cys217. A Cysteine methyl ester modification is found at Cys217.

It belongs to the small GTPase superfamily. Rab family. The cofactor is Mg(2+). In terms of tissue distribution, expressed in a tissue-specific manner. Detected at high levels in intestine, lung and spleen, and at a lower level in kidney.

It localises to the cell membrane. The catalysed reaction is GTP + H2O = GDP + phosphate + H(+). Regulated by guanine nucleotide exchange factors (GEFs) which promote the exchange of bound GDP for free GTP. Regulated by GTPase activating proteins (GAPs) which increase the GTP hydrolysis activity. Inhibited by GDP dissociation inhibitors (GDIs). The small GTPases Rab are key regulators of intracellular membrane trafficking, from the formation of transport vesicles to their fusion with membranes. Rabs cycle between an inactive GDP-bound form and an active GTP-bound form that is able to recruit to membranes different set of downstream effectors directly responsible for vesicle formation, movement, tethering and fusion. The chain is Ras-related protein Rab-19 from Mus musculus (Mouse).